Here is a 134-residue protein sequence, read N- to C-terminus: Ribosome-binding factor A (134 aa).

Belongs to the RbfA family. In terms of assembly, monomer. Binds 30S ribosomal subunits, but not 50S ribosomal subunits or 70S ribosomes.

The protein resides in the cytoplasm. Functionally, one of several proteins that assist in the late maturation steps of the functional core of the 30S ribosomal subunit. Associates with free 30S ribosomal subunits (but not with 30S subunits that are part of 70S ribosomes or polysomes). Required for efficient processing of 16S rRNA. May interact with the 5'-terminal helix region of 16S rRNA. This is Ribosome-binding factor A from Psychrobacter arcticus (strain DSM 17307 / VKM B-2377 / 273-4).